The primary structure comprises 651 residues: Carboxypeptidase S1 homolog A (651 aa).

A signal peptide spans 1-19 (MHLATGLAVALPFIGAASA). A disulfide bridge connects residues C50 and C121. N77, N125, N128, N161, N184, and N202 each carry an N-linked (GlcNAc...) asparagine glycan. S238 is a catalytic residue. N-linked (GlcNAc...) asparagine glycans are attached at residues N260, N299, N308, N347, and N410. Intrachain disulfides connect C325–C361 and C332–C354. D458 is a catalytic residue. C461 provides a ligand contact to substrate. N474 and N504 each carry an N-linked (GlcNAc...) asparagine glycan. The active site involves H515. E516 is a substrate binding site. The segment at 604–630 (KSPAGKKQGPPPTSTSPPSPTSSSEGS) is disordered. The segment covering 612-623 (GPPPTSTSPPSP) has biased composition (pro residues). A lipid anchor (GPI-anchor amidated serine) is attached at S625. A propeptide spans 626–651 (SSEGSVKEFSVSVLGVSVLAAITFFL) (removed in mature form).

This sequence belongs to the peptidase S10 family.

It localises to the cell membrane. It carries out the reaction Preferential release of a C-terminal arginine or lysine residue.. Extracellular serine carboxypeptidase that contributes to pathogenicity. In Arthroderma otae (strain ATCC MYA-4605 / CBS 113480) (Microsporum canis), this protein is Carboxypeptidase S1 homolog A (SCPA).